The primary structure comprises 221 residues: UPF0502 protein PSPTO_2686 (221 aa).

It belongs to the UPF0502 family.

This chain is UPF0502 protein PSPTO_2686, found in Pseudomonas syringae pv. tomato (strain ATCC BAA-871 / DC3000).